Here is a 364-residue protein sequence, read N- to C-terminus: O-methyltransferase ZRP4 (364 aa).

Positions 208, 231, 251, 252, and 265 each coordinate S-adenosyl-L-methionine. His269 acts as the Proton acceptor in catalysis.

This sequence belongs to the class I-like SAM-binding methyltransferase superfamily. Cation-independent O-methyltransferase family. COMT subfamily. Homodimer. As to expression, accumulates preferentially in the roots and is located predominantly in the region of the endodermis, low levels are seen in the leaves, stems and other shoot organs.

Its function is as follows. May be involved in the O-methylation of suberin phenylpropanoid precursors. This chain is O-methyltransferase ZRP4 (ZRP4), found in Zea mays (Maize).